Here is a 234-residue protein sequence, read N- to C-terminus: Lipoprotein-releasing system ATP-binding protein LolD (234 aa).

In terms of domain architecture, ABC transporter spans 13–233 (IYLHEIKRQY…SLSDGQVVEL (221 aa)). ATP is bound at residue 49–56 (APSGSGKS).

This sequence belongs to the ABC transporter superfamily. Lipoprotein translocase (TC 3.A.1.125) family. In terms of assembly, the complex is composed of two ATP-binding proteins (LolD) and two transmembrane proteins (LolC and LolE).

The protein localises to the cell inner membrane. Functionally, part of the ABC transporter complex LolCDE involved in the translocation of mature outer membrane-directed lipoproteins, from the inner membrane to the periplasmic chaperone, LolA. Responsible for the formation of the LolA-lipoprotein complex in an ATP-dependent manner. The protein is Lipoprotein-releasing system ATP-binding protein LolD of Bradyrhizobium diazoefficiens (strain JCM 10833 / BCRC 13528 / IAM 13628 / NBRC 14792 / USDA 110).